A 494-amino-acid polypeptide reads, in one-letter code: MPTTSSTATHDVVLIGGGIMSATLGVLLQKLEPTWSIALYENLDQAGLESSDPWNNAGTGHAALCELNYSPMDKNGRVDVTKALGINEQFWITRQFWSSLVVDGTLKDPKSFINPLPHMSFVWGDDHADYLRARYEAMSAQPVFAGMEHSEDPEQIRAWAPLLIEGRESGQRLAASRHTGGTDVDFGSLTRQLVTAMAGAGAEVRFGHKVTGLTRGTDGRWEVKVKNKAAGSEVVDRARFVFVGAGGGALPLLQKSGIPEIKGFGGFPVSGQFLRCTDESVVNQHMAKVYGQAAVGAPPMSVPHLDTRFVNGKRSLLFGPYAGFSTNFLKTGSYLDLPLSVRPHNLTTMLDVAKDNVDLTKYLVTEVLKSRDKKIDALHEFYPEADGGEWELITAGQRVQVMKRKGRFGGVLQFGTEVVTHADGSLGGLLGASPGASTAAPIMVKLLERCFPAKTAGWDGTLKELIPSLGHTLNDDPALLDEVRTVTDAALKLA.

Belongs to the MQO family. FAD serves as cofactor.

The catalysed reaction is (S)-malate + a quinone = a quinol + oxaloacetate. Its pathway is carbohydrate metabolism; tricarboxylic acid cycle; oxaloacetate from (S)-malate (quinone route): step 1/1. The chain is Probable malate:quinone oxidoreductase from Micrococcus luteus (strain ATCC 4698 / DSM 20030 / JCM 1464 / CCM 169 / CCUG 5858 / IAM 1056 / NBRC 3333 / NCIMB 9278 / NCTC 2665 / VKM Ac-2230) (Micrococcus lysodeikticus).